The primary structure comprises 664 residues: MSSIVRNSDDDPLVIAIQQPRIAIESVSPVVEEGAYPAKTESDRDLRLAARIFADGHEVLGAEVVWRRVGETAERRLPLLPEGNDFWSAQLRTPPCGRLYFRIEAWIDRFAGYRRELRAKHGARLPLDLELREGDELLQRCAERGGPEIAAACAPLAERLQACQSVEERVALWLAAQTGELLRLVGPREHLVRSREYPVEVERPLARFASWYELFPRSESGDPTRHGTFDDVIRRLPQIAAMGFDVLYFPPIHPIGRTHRKGRNNSLRAEAGDPGSPYAIGSEEGGHEAIHPELGDREDFRRLLVAVREHGMELALDFAIQCSPDHPWLREHPGWFAWRPDGSLRYAENPPKKYEDIVNVDFYAEQALPSLWEALRDVVLGWVEQGVTLFRVDNPHTKPLPFWEWLIAEVRGRHPQVIFLSEAFTRPAMMARLGKVGFSQSYTYFTWRNDKQELAEYFAELNQPPWRDCYRPNFFVNTPDINPWFLQRSGRPGFLIRAALATMGSGLWGMYSGFELCEAAALPGKEEYLDSEKYQLRPRDYQAPGNIVAEIARLNRIRRENPALQTHLGFQAYNAWNDRILYFGKRTADLANFVLVAVCLDPHEAQEAHFELPLWEFGLPDDASLQGEDLMNGHRWVWHGKVQWMRIEPWHLPFGIWRVRRVDA.

Positions 261, 321, and 356 each coordinate alpha-maltose 1-phosphate. The active-site Nucleophile is Asp-393. Residue Asn-394 participates in alpha-maltose 1-phosphate binding. Glu-422 functions as the Proton donor in the catalytic mechanism. 533-534 (KY) lines the alpha-maltose 1-phosphate pocket.

Belongs to the glycosyl hydrolase 13 family. GlgE subfamily. As to quaternary structure, homodimer.

It catalyses the reaction alpha-maltose 1-phosphate + [(1-&gt;4)-alpha-D-glucosyl](n) = [(1-&gt;4)-alpha-D-glucosyl](n+2) + phosphate. In terms of biological role, maltosyltransferase that uses maltose 1-phosphate (M1P) as the sugar donor to elongate linear or branched alpha-(1-&gt;4)-glucans. Is involved in a branched alpha-glucan biosynthetic pathway from trehalose, together with TreS, Mak and GlgB. This chain is Alpha-1,4-glucan:maltose-1-phosphate maltosyltransferase, found in Pseudomonas aeruginosa (strain ATCC 15692 / DSM 22644 / CIP 104116 / JCM 14847 / LMG 12228 / 1C / PRS 101 / PAO1).